The chain runs to 150 residues: Endoribonuclease YbeY (150 aa).

Histidine 112, histidine 116, and aspartate 122 together coordinate Zn(2+).

This sequence belongs to the endoribonuclease YbeY family. Requires Zn(2+) as cofactor.

Its subcellular location is the cytoplasm. Its function is as follows. Single strand-specific metallo-endoribonuclease involved in late-stage 70S ribosome quality control and in maturation of the 3' terminus of the 16S rRNA. The polypeptide is Endoribonuclease YbeY (Protochlamydia amoebophila (strain UWE25)).